The primary structure comprises 397 residues: Lipid-A-disaccharide synthase (397 aa).

It belongs to the LpxB family.

It catalyses the reaction a lipid X + a UDP-2-N,3-O-bis[(3R)-3-hydroxyacyl]-alpha-D-glucosamine = a lipid A disaccharide + UDP + H(+). It functions in the pathway bacterial outer membrane biogenesis; LPS lipid A biosynthesis. Functionally, condensation of UDP-2,3-diacylglucosamine and 2,3-diacylglucosamine-1-phosphate to form lipid A disaccharide, a precursor of lipid A, a phosphorylated glycolipid that anchors the lipopolysaccharide to the outer membrane of the cell. The chain is Lipid-A-disaccharide synthase from Mannheimia succiniciproducens (strain KCTC 0769BP / MBEL55E).